The primary structure comprises 295 residues: Bifunctional protein FolD (295 aa).

Residues 165 to 167 (GRG), Ser-192, and Ile-233 contribute to the NADP(+) site.

The protein belongs to the tetrahydrofolate dehydrogenase/cyclohydrolase family. As to quaternary structure, homodimer.

It carries out the reaction (6R)-5,10-methylene-5,6,7,8-tetrahydrofolate + NADP(+) = (6R)-5,10-methenyltetrahydrofolate + NADPH. The catalysed reaction is (6R)-5,10-methenyltetrahydrofolate + H2O = (6R)-10-formyltetrahydrofolate + H(+). The protein operates within one-carbon metabolism; tetrahydrofolate interconversion. In terms of biological role, catalyzes the oxidation of 5,10-methylenetetrahydrofolate to 5,10-methenyltetrahydrofolate and then the hydrolysis of 5,10-methenyltetrahydrofolate to 10-formyltetrahydrofolate. This is Bifunctional protein FolD from Tropheryma whipplei (strain Twist) (Whipple's bacillus).